The primary structure comprises 676 residues: MSKLFISCALPYANGPCHLGHLRSTYIPADIYARYNRMTGVDTLMVCSTDEHGTPIAVRAEQEKKNPKDITDIYHEIIGNDLKSCNISLDSFRRTTDEIHYKMAQDFFLDLYNKGYIYEKVIDQLYCDECKRSLPDRYVEGTCPYCESEGARGDQCEVCGRHLNPTDLVEPHCLICDSTPHIEQSKQYYFKLHEFEQPLKEWINSNEHLPKNVKNFAKEWLNDGLKDWIMTRDMNWGIPVPLNDAEGKVLYVWAEAFEGYQSSAASWANKHDLDWKEYWDDKTVHFIGKDIIYHHTLFWPSMLMGRGWNLPYSVVGGGYLSLEGRKMSTSKGWVIWVEDFLKKFDSDLLRYYMVINAPLNKDTDFSWDDFQRRVNNELTDNLGNFIHRTFTFTNKFFDGKIPEMGSYTDEDKEFEEKIKALPDVVANYIDNFQFREGLQGIMSLTKEANKYFNDKKPWKGVKEDIESAKTCINLSNQLVHVLSIVLTPYIPISVQKIRKVLNMPTEHVDGFMKFEERTPLVKWDEAKEFLPAGYEINSAKPLFSKIPDEIIKEEKDKLYSLEEENKENEDDNMSDLISIDEFGKVKLVVGQIKEAQKIDGSENLLKLQVDLGKEVRQVVAGIAKRYEVDELIDKKVIVVANLQPAKLFGVESNGMLLATDSMELLTTEGNVGEYIK.

The short motif at 11–21 is the 'HIGH' region element; sequence PYANGPCHLGH. Residues Cys-143, Cys-146, Cys-156, and Cys-159 each coordinate Zn(2+). The 'KMSKS' region motif lies at 326–330; the sequence is KMSTS. Thr-329 is a binding site for ATP. The region spanning 581 to 676 is the tRNA-binding domain; it reads EFGKVKLVVG…TEGNVGEYIK (96 aa).

It belongs to the class-I aminoacyl-tRNA synthetase family. MetG type 1 subfamily. In terms of assembly, homodimer. Zn(2+) is required as a cofactor.

The protein resides in the cytoplasm. The catalysed reaction is tRNA(Met) + L-methionine + ATP = L-methionyl-tRNA(Met) + AMP + diphosphate. Functionally, is required not only for elongation of protein synthesis but also for the initiation of all mRNA translation through initiator tRNA(fMet) aminoacylation. The protein is Methionine--tRNA ligase of Methanosphaera stadtmanae (strain ATCC 43021 / DSM 3091 / JCM 11832 / MCB-3).